The chain runs to 648 residues: Threonine--tRNA ligase (648 aa).

The TGS domain maps to Met1–Thr61. The interval Asp242–Pro540 is catalytic. Positions 336, 387, and 517 each coordinate Zn(2+).

This sequence belongs to the class-II aminoacyl-tRNA synthetase family. In terms of assembly, homodimer. Zn(2+) is required as a cofactor.

It is found in the cytoplasm. The enzyme catalyses tRNA(Thr) + L-threonine + ATP = L-threonyl-tRNA(Thr) + AMP + diphosphate + H(+). Its function is as follows. Catalyzes the attachment of threonine to tRNA(Thr) in a two-step reaction: L-threonine is first activated by ATP to form Thr-AMP and then transferred to the acceptor end of tRNA(Thr). Also edits incorrectly charged L-seryl-tRNA(Thr). The chain is Threonine--tRNA ligase from Streptococcus uberis (strain ATCC BAA-854 / 0140J).